The sequence spans 309 residues: Cutinase (309 aa).

Positions 1 to 47 (MSALTSQPTSSGSSEKIPRLRGWRAKAAGVVLAALALTTGVAAPAPA) are cleaved as a signal peptide. The Nucleophile role is filled by Ser-178. Active-site charge relay system residues include Asp-224 and His-256. Cysteines 289 and 305 form a disulfide.

It belongs to the AB hydrolase superfamily.

It localises to the secreted. It carries out the reaction a carboxylic ester + H2O = an alcohol + a carboxylate + H(+). The catalysed reaction is a triacylglycerol + H2O = a diacylglycerol + a fatty acid + H(+). The enzyme catalyses 1,2,3-tri-(9Z-octadecenoyl)-glycerol + H2O = di-(9Z)-octadecenoylglycerol + (9Z)-octadecenoate + H(+). It catalyses the reaction (6-hydroxyhexanoyl)(n) + H2O = (6-hydroxyhexanoyl)(n-1) + 6-hydroxyhexanoate + H(+). It carries out the reaction cutin + H2O = cutin monomers.. No effect on activity by SDS or chelating agents ethylenediaminetetraacetic acid (EDTA) or sodium citrate. No effect on activity by metal ions Ag(+), Ba(2+), Ca(2+), Co(2+), Cu(2+), Mn(2+), Ni(2+), Pb(2+) or Zn(2+). Activated by 1 mM digitonin and sodium deoxycholate, and reducing agents 1 mM 1,4-dithiothreitol, beta-mercaptoethanol and ascorbic acid. Activated by benzene, n-hexane, p-xylene and toluene. Activated by Fe(3+). Inhibited slightly by 1 mM of different chain length fatty acids, and only marginally by 6.0 M urea. Inhibited strongly with chemical modification by reagents phenyl methyl sulfonylfluorid (PMSF), 1-ethyl-3-(3-dimethylaminopropyl) carbodiimide (EDAC), diethylpyrocarbonate (DEPC) and N-bromosuccinimide (NBS). Inhibited by pyridine, DMSO, t-butanol and dodecane. Inhibited by Li(+), Hg(2+) and Mg(2+). No inhibition with chemical modification by reagents N-acetylimidazole (NAI), citraconic anhydride (CA), iodoacetate (IA) and phenylglyoxal (PG). In terms of biological role, catalyzes the hydrolysis of cutin, a polyester that forms the structure of plant cuticle. Shows esterase activity towards p-nitrophenol-linked aliphatic esters (pNP-aliphatic esters). Has a preference for medium chain length (C-4 to C-12) fatty acid esters. Active with p-nitrophenyl palmitate (p-NPP) as substrate. Hydrolyzes triacylglycerol substrates non-specifically with a preference for long, unsaturated fatty acyl chains with the highest activity for triolein. Substrates with cis-9 unsaturation are preferred over the saturated triacylglycerols. Hydrolyzes a wide range of natural oils, especially olive oil, with relatively high activity. Capable of catalyzing synthesis of the flavor ester isoamyl acetate by esterification of isoamyl alcohol using acetic acid as an acyl donor. Degrades synthetic aliphatic polyesters, namely poly(1,4-butylene succinate) extended with 1,6-diisocyanatohexane (PBSc-D) and poly(epsilon-caprolactone) (PCL) plastics. Does not degrade poly(lactic acid) (PLA) nor aromatic poly(ethylene terephthalate) (PET), the most abundant polyester plastic in the world. The protein is Cutinase of Amycolatopsis mediterranei (strain S699) (Nocardia mediterranei).